The chain runs to 358 residues: Phospho-N-acetylmuramoyl-pentapeptide-transferase (358 aa).

Helical transmembrane passes span 3-23 (QILF…PALI), 54-74 (GVAI…IGIA), 84-104 (ALLV…DDFI), 114-134 (LTAA…GVLA), 156-176 (ITTV…VVVA), 187-207 (LDGL…IITF), 231-251 (LALV…WNAA), 255-275 (IFMG…LSIT), 283-303 (VVIG…VAVF), and 330-350 (VIIR…GLFY).

This sequence belongs to the glycosyltransferase 4 family. MraY subfamily. The cofactor is Mg(2+).

It is found in the cell membrane. The enzyme catalyses UDP-N-acetyl-alpha-D-muramoyl-L-alanyl-gamma-D-glutamyl-meso-2,6-diaminopimeloyl-D-alanyl-D-alanine + di-trans,octa-cis-undecaprenyl phosphate = di-trans,octa-cis-undecaprenyl diphospho-N-acetyl-alpha-D-muramoyl-L-alanyl-D-glutamyl-meso-2,6-diaminopimeloyl-D-alanyl-D-alanine + UMP. The protein operates within cell wall biogenesis; peptidoglycan biosynthesis. Catalyzes the initial step of the lipid cycle reactions in the biosynthesis of the cell wall peptidoglycan: transfers peptidoglycan precursor phospho-MurNAc-pentapeptide from UDP-MurNAc-pentapeptide onto the lipid carrier undecaprenyl phosphate, yielding undecaprenyl-pyrophosphoryl-MurNAc-pentapeptide, known as lipid I. This Nocardia farcinica (strain IFM 10152) protein is Phospho-N-acetylmuramoyl-pentapeptide-transferase.